Consider the following 763-residue polypeptide: Amine oxidase [copper-containing] 3 (763 aa).

Residues Met-1 to Thr-6 lie on the Cytoplasmic side of the membrane. Residues Leu-7–Gly-27 traverse the membrane as a helical; Signal-anchor for type II membrane protein segment. The Extracellular segment spans residues Arg-28 to Asn-763. An N-linked (GlcNAc...) asparagine glycan is attached at Asn-137. The cysteines at positions 198 and 199 are disulfide-linked. N-linked (GlcNAc...) asparagine glycosylation is found at Asn-232 and Asn-294. Catalysis depends on Asp-386, which acts as the Proton acceptor. A disulfide bond links Cys-404 and Cys-430. Tyr-471 acts as the Schiff-base intermediate with substrate; via topaquinone in catalysis. Tyr-471 is subject to 2',4',5'-topaquinone. Cu(2+) contacts are provided by His-520 and His-522. Asp-529, Leu-530, Asp-531, and Glu-572 together coordinate Ca(2+). An N-linked (GlcNAc...) asparagine glycan is attached at Asn-618. Ca(2+) contacts are provided by Glu-641, Phe-663, and Asn-665. An N-linked (GlcNAc...) asparagine glycan is attached at Asn-666. Ca(2+) contacts are provided by Glu-667, Asp-673, and Leu-674. His-684 contacts Cu(2+). Cys-734 and Cys-741 are disulfide-bonded.

It belongs to the copper/topaquinone oxidase family. As to quaternary structure, homodimer; disulfide-linked. Probably forms heterodimers with AOC2. It depends on Cu(2+) as a cofactor. Ca(2+) serves as cofactor. Requires L-topaquinone as cofactor. In terms of processing, topaquinone (TPQ) is generated by copper-dependent autoxidation of a specific tyrosyl residue. Post-translationally, N- and O-glycosylated.

Its subcellular location is the cell membrane. It carries out the reaction methylamine + O2 + H2O = formaldehyde + H2O2 + NH4(+). The catalysed reaction is benzylamine + O2 + H2O = benzaldehyde + H2O2 + NH4(+). It catalyses the reaction 2-phenylethylamine + O2 + H2O = 2-phenylacetaldehyde + H2O2 + NH4(+). Its function is as follows. Catalyzes the oxidative deamination of primary amines to the corresponding aldehydes with the concomitant production of hydrogen peroxide and ammonia. Has a preference for the primary monoamines methylamine and benzylamine. Could also act on 2-phenylethylamine but much less efficiently. At endothelial cells surface can also function as a cell adhesion protein that participates in lymphocyte extravasation and recirculation by mediating the binding of lymphocytes to peripheral lymph node vascular endothelial cells in an L-selectin-independent fashion. The chain is Amine oxidase [copper-containing] 3 from Bos taurus (Bovine).